We begin with the raw amino-acid sequence, 534 residues long: GTPase Obg (534 aa).

Residues 2–159 enclose the Obg domain; it reads ASFVDRVVLH…SDIVLELKSI (158 aa). Residues 63-82 are disordered; the sequence is APHRHASNGGQGMGDWRGGK. The span at 71–82 shows a compositional bias: gly residues; the sequence is GGQGMGDWRGGK. Positions 160 to 343 constitute an OBG-type G domain; that stretch reads ADIALVGFPS…LSFAMAELVT (184 aa). GTP is bound by residues 166-173, 191-195, 212-215, 295-298, and 324-326; these read GFPSAGKS, FTTLI, DVPG, NKID, and SAS. Residues Ser-173 and Thr-193 each contribute to the Mg(2+) site. Residues 363–449 enclose the OCT domain; it reads PRAVNRKEFT…ENAVVFDWEP (87 aa). The segment at 456 to 534 is disordered; sequence ELLSGPRGTD…AASTDDGDAL (79 aa). 2 stretches are compositionally biased toward basic and acidic residues: residues 464 to 504 and 512 to 526; these read TDPR…ERKA and SARR…REAA.

The protein belongs to the TRAFAC class OBG-HflX-like GTPase superfamily. OBG GTPase family. As to quaternary structure, monomer. The cofactor is Mg(2+).

Its subcellular location is the cytoplasm. Functionally, an essential GTPase which binds GTP, GDP and possibly (p)ppGpp with moderate affinity, with high nucleotide exchange rates and a fairly low GTP hydrolysis rate. Plays a role in control of the cell cycle, stress response, ribosome biogenesis and in those bacteria that undergo differentiation, in morphogenesis control. The chain is GTPase Obg from Renibacterium salmoninarum (strain ATCC 33209 / DSM 20767 / JCM 11484 / NBRC 15589 / NCIMB 2235).